A 90-amino-acid chain; its full sequence is MSADGPVVNVHVLFFAKSRELAQTPRSKVDVPSQIVASDLLDQLVTRFDLASIKDNLILAHNESYIENLSDKILFREGDELAVIPPLSGG.

Glycine 90 carries the post-translational modification 1-thioglycine; alternate. Glycine 90 is modified (glycyl adenylate; alternate).

This sequence belongs to the MoaD family. MOCS2A subfamily. In terms of assembly, heterotetramer; composed of 2 small (Mocs2A) and 2 large (Mocs2B) subunits. Post-translationally, C-terminal thiocarboxylation occurs in 2 steps, it is first acyl-adenylated (-COAMP) via the hesA/moeB/thiF part of MOCS3, then thiocarboxylated (-COSH) via the rhodanese domain of MOCS3.

The protein resides in the cytoplasm. It participates in cofactor biosynthesis; molybdopterin biosynthesis. Acts as a sulfur carrier required for molybdopterin biosynthesis. Component of the molybdopterin synthase complex that catalyzes the conversion of precursor Z into molybdopterin by mediating the incorporation of 2 sulfur atoms into precursor Z to generate a dithiolene group. In the complex, serves as sulfur donor by being thiocarboxylated (-COSH) at its C-terminus by MOCS3. After interaction with Mocs2B, the sulfur is then transferred to precursor Z to form molybdopterin. This is Molybdopterin synthase sulfur carrier subunit from Drosophila ananassae (Fruit fly).